We begin with the raw amino-acid sequence, 565 residues long: Sulfite reductase [NADPH] hemoprotein beta-component (565 aa).

Positions 429, 435, 474, and 478 each coordinate [4Fe-4S] cluster. Position 478 (Cys478) interacts with siroheme.

Belongs to the nitrite and sulfite reductase 4Fe-4S domain family. In terms of assembly, alpha(8)-beta(8). The alpha component is a flavoprotein, the beta component is a hemoprotein. Siroheme serves as cofactor. It depends on [4Fe-4S] cluster as a cofactor.

The catalysed reaction is hydrogen sulfide + 3 NADP(+) + 3 H2O = sulfite + 3 NADPH + 4 H(+). It participates in sulfur metabolism; hydrogen sulfide biosynthesis; hydrogen sulfide from sulfite (NADPH route): step 1/1. Functionally, component of the sulfite reductase complex that catalyzes the 6-electron reduction of sulfite to sulfide. This is one of several activities required for the biosynthesis of L-cysteine from sulfate. This Shewanella baltica (strain OS185) protein is Sulfite reductase [NADPH] hemoprotein beta-component.